A 391-amino-acid polypeptide reads, in one-letter code: Multidrug resistance protein MdtL (391 aa).

The next 12 helical transmembrane spans lie at 4–24 (FLIC…MYLV), 42–62 (IAFS…GKVA), 69–89 (PVAI…SLAE), 93–113 (LFLA…VVAF), 131–151 (LLNG…HLIM), 158–178 (SLFW…LFIL), 203–222 (FFLS…LTFV), 245–265 (ALTA…LGIF), 269–289 (TLMI…AVSP), 293–313 (ISLF…GVAM), 324–346 (AGVA…IWLA), and 363–383 (ACSI…PVAA).

This sequence belongs to the major facilitator superfamily. DHA1 family. MdtL (TC 2.A.1.2.22) subfamily.

The protein localises to the cell inner membrane. Confers resistance to chloramphenicol. This Escherichia fergusonii (strain ATCC 35469 / DSM 13698 / CCUG 18766 / IAM 14443 / JCM 21226 / LMG 7866 / NBRC 102419 / NCTC 12128 / CDC 0568-73) protein is Multidrug resistance protein MdtL.